Reading from the N-terminus, the 65-residue chain is Small ribosomal subunit protein bS21A (65 aa).

This sequence belongs to the bacterial ribosomal protein bS21 family.

The chain is Small ribosomal subunit protein bS21A from Francisella tularensis subsp. tularensis (strain FSC 198).